The sequence spans 144 residues: SsrA-binding protein (144 aa).

This sequence belongs to the SmpB family.

The protein resides in the cytoplasm. Its function is as follows. Required for rescue of stalled ribosomes mediated by trans-translation. Binds to transfer-messenger RNA (tmRNA), required for stable association of tmRNA with ribosomes. tmRNA and SmpB together mimic tRNA shape, replacing the anticodon stem-loop with SmpB. tmRNA is encoded by the ssrA gene; the 2 termini fold to resemble tRNA(Ala) and it encodes a 'tag peptide', a short internal open reading frame. During trans-translation Ala-aminoacylated tmRNA acts like a tRNA, entering the A-site of stalled ribosomes, displacing the stalled mRNA. The ribosome then switches to translate the ORF on the tmRNA; the nascent peptide is terminated with the 'tag peptide' encoded by the tmRNA and targeted for degradation. The ribosome is freed to recommence translation, which seems to be the essential function of trans-translation. This is SsrA-binding protein from Thermus thermophilus (strain ATCC BAA-163 / DSM 7039 / HB27).